The chain runs to 109 residues: Prefoldin subunit 1 (109 aa).

N-acetylserine is present on S2.

Belongs to the prefoldin subunit beta family. Heterohexamer of two PFD-alpha type and four PFD-beta type subunits.

It localises to the cytoplasm. Its function is as follows. Binds specifically to cytosolic chaperonin (c-CPN) and transfers target proteins to it. Binds to nascent polypeptide chain and promotes folding in an environment in which there are many competing pathways for nonnative proteins. This is Prefoldin subunit 1 (PFD1) from Saccharomyces cerevisiae (strain ATCC 204508 / S288c) (Baker's yeast).